Consider the following 573-residue polypeptide: Proline--tRNA ligase (573 aa).

Belongs to the class-II aminoacyl-tRNA synthetase family. ProS type 1 subfamily. As to quaternary structure, homodimer.

The protein localises to the cytoplasm. The enzyme catalyses tRNA(Pro) + L-proline + ATP = L-prolyl-tRNA(Pro) + AMP + diphosphate. In terms of biological role, catalyzes the attachment of proline to tRNA(Pro) in a two-step reaction: proline is first activated by ATP to form Pro-AMP and then transferred to the acceptor end of tRNA(Pro). As ProRS can inadvertently accommodate and process non-cognate amino acids such as alanine and cysteine, to avoid such errors it has two additional distinct editing activities against alanine. One activity is designated as 'pretransfer' editing and involves the tRNA(Pro)-independent hydrolysis of activated Ala-AMP. The other activity is designated 'posttransfer' editing and involves deacylation of mischarged Ala-tRNA(Pro). The misacylated Cys-tRNA(Pro) is not edited by ProRS. This chain is Proline--tRNA ligase, found in Caldanaerobacter subterraneus subsp. tengcongensis (strain DSM 15242 / JCM 11007 / NBRC 100824 / MB4) (Thermoanaerobacter tengcongensis).